The chain runs to 171 residues: Translation initiation factor IF-3 (171 aa).

This sequence belongs to the IF-3 family. In terms of assembly, monomer.

It is found in the cytoplasm. Its function is as follows. IF-3 binds to the 30S ribosomal subunit and shifts the equilibrium between 70S ribosomes and their 50S and 30S subunits in favor of the free subunits, thus enhancing the availability of 30S subunits on which protein synthesis initiation begins. The polypeptide is Translation initiation factor IF-3 (Halalkalibacterium halodurans (strain ATCC BAA-125 / DSM 18197 / FERM 7344 / JCM 9153 / C-125) (Bacillus halodurans)).